Here is a 155-residue protein sequence, read N- to C-terminus: Small ribosomal subunit protein uS17 (155 aa).

An N-acetylalanine modification is found at alanine 2.

It belongs to the universal ribosomal protein uS17 family.

The polypeptide is Small ribosomal subunit protein uS17 (Drosophila yakuba (Fruit fly)).